The sequence spans 334 residues: GTP 3',8-cyclase (334 aa).

In terms of domain architecture, Radical SAM core spans 11 to 235; sequence GFNRKVDYLR…VESAESSQGP (225 aa). Residue arginine 20 participates in GTP binding. [4Fe-4S] cluster-binding residues include cysteine 27 and cysteine 31. Tyrosine 33 is a binding site for S-adenosyl-L-methionine. Cysteine 34 contributes to the [4Fe-4S] cluster binding site. Arginine 69 contacts GTP. Residue glycine 73 coordinates S-adenosyl-L-methionine. Threonine 100 serves as a coordination point for GTP. Serine 124 is an S-adenosyl-L-methionine binding site. A GTP-binding site is contributed by lysine 161. An S-adenosyl-L-methionine-binding site is contributed by methionine 195. Residues cysteine 260 and cysteine 263 each coordinate [4Fe-4S] cluster. Residue 265–267 participates in GTP binding; the sequence is RVR. Position 277 (cysteine 277) interacts with [4Fe-4S] cluster.

It belongs to the radical SAM superfamily. MoaA family. As to quaternary structure, monomer and homodimer. Requires [4Fe-4S] cluster as cofactor.

The catalysed reaction is GTP + AH2 + S-adenosyl-L-methionine = (8S)-3',8-cyclo-7,8-dihydroguanosine 5'-triphosphate + 5'-deoxyadenosine + L-methionine + A + H(+). The protein operates within cofactor biosynthesis; molybdopterin biosynthesis. Catalyzes the cyclization of GTP to (8S)-3',8-cyclo-7,8-dihydroguanosine 5'-triphosphate. This chain is GTP 3',8-cyclase, found in Pseudomonas entomophila (strain L48).